The chain runs to 126 residues: Aspartate 1-decarboxylase (126 aa).

Catalysis depends on S25, which acts as the Schiff-base intermediate with substrate; via pyruvic acid. Residue S25 is modified to Pyruvic acid (Ser). T57 serves as a coordination point for substrate. The active-site Proton donor is Y58. 73–75 (GAA) is a binding site for substrate.

This sequence belongs to the PanD family. In terms of assembly, heterooctamer of four alpha and four beta subunits. Requires pyruvate as cofactor. In terms of processing, is synthesized initially as an inactive proenzyme, which is activated by self-cleavage at a specific serine bond to produce a beta-subunit with a hydroxyl group at its C-terminus and an alpha-subunit with a pyruvoyl group at its N-terminus.

Its subcellular location is the cytoplasm. It catalyses the reaction L-aspartate + H(+) = beta-alanine + CO2. It participates in cofactor biosynthesis; (R)-pantothenate biosynthesis; beta-alanine from L-aspartate: step 1/1. Catalyzes the pyruvoyl-dependent decarboxylation of aspartate to produce beta-alanine. This is Aspartate 1-decarboxylase from Psychromonas ingrahamii (strain DSM 17664 / CCUG 51855 / 37).